Here is a 474-residue protein sequence, read N- to C-terminus: Homeobox protein PKNOX2 (474 aa).

Residues 1–42 (MMQHASPAPALTMMATQNVPPPPYQDSPQMTATAQPPSKAQA) are disordered. Positions 26-38 (DSPQMTATAQPPS) are enriched in polar residues. Residues 96 to 179 (GSECITSASF…MHSDNLLRND (84 aa)) form the MEIS N-terminal domain. The homeobox DNA-binding region spans 291–350 (KRGVLPKHATNIMRSWLFQHLMHPYPTEDEKRQIAAQTNLTLLQVNNWFINARRRILQPM). 3 disordered regions span residues 351–371 (LDAS…QHRP), 385–405 (LQQQ…LDNL), and 423–474 (AAHD…DSLE). The span at 361–371 (KAKKIKSQHRP) shows a compositional bias: basic residues. Over residues 429–456 (LDGTEEEDEDDMEEEEEEEEELEEEADE) the composition is skewed to acidic residues.

It belongs to the TALE/MEIS homeobox family.

It localises to the nucleus. The polypeptide is Homeobox protein PKNOX2 (Pknox2) (Mus musculus (Mouse)).